A 227-amino-acid chain; its full sequence is Ion-translocating oxidoreductase complex subunit E (227 aa).

5 consecutive transmembrane segments (helical) span residues 34-56 (AINA…TIIS), 68-88 (IPIY…LLHA), 91-111 (FNLY…CIIV), 127-147 (FFDG…VGSI), and 181-201 (TIIL…LIAI).

It belongs to the NqrDE/RnfAE family. As to quaternary structure, the complex is composed of six subunits: RnfA, RnfB, RnfC, RnfD, RnfE and RnfG.

The protein localises to the cell inner membrane. In terms of biological role, part of a membrane-bound complex that couples electron transfer with translocation of ions across the membrane. The polypeptide is Ion-translocating oxidoreductase complex subunit E (Buchnera aphidicola subsp. Acyrthosiphon pisum (strain 5A)).